The following is a 127-amino-acid chain: uncharacterized protein (127 aa).

Disordered regions lie at residues 1–22 (MLPAGCWNDTSRDGPGFRKMKG) and 53–106 (LVGK…PGPK). The span at 76-95 (PNGEAHAEQARRKISVEEKQ) shows a compositional bias: basic and acidic residues.

Its subcellular location is the mitochondrion. This is an uncharacterized protein from Arabidopsis thaliana (Mouse-ear cress).